Reading from the N-terminus, the 175-residue chain is Receptor activity-modifying protein 2 (175 aa).

Positions 1 to 42 (MASLRVERAGGPRLPRTRVGRPAALRLLLLLGAVLNPHEALA) are cleaved as a signal peptide. At 43–143 (QPLPTTGTPG…VQPTFSDPPE (101 aa)) the chain is on the extracellular side. 2 disulfide bridges follow: C68–C99 and C84–C131. N130 carries N-linked (GlcNAc...) asparagine glycosylation. The helical transmembrane segment at 144–165 (DVLLAMIIAPICLIPFLITLVV) threads the bilayer. Residues 166–175 (WRSKDSEAQA) lie on the Cytoplasmic side of the membrane.

Belongs to the RAMP family. As to quaternary structure, heterodimer of CALCRL and RAMP2; the interaction forms the receptor complex for adrenomedullin/ADM. Heterodimer of CALCR and RAMP2; interaction forms the AMYR2 receptor complex for calcitonin/CALC and amylin/IAPP. As to expression, strongly expressed in lung, breast, immune system and fetal tissues.

It localises to the cell membrane. Its function is as follows. Accessory protein that interacts with and modulates the function of G-protein coupled receptors including calcitonin gene-related peptide type 1 receptor (CALCRL) and calcitonin receptor (CALCR). Required for the transport of CALCRL to the plasma membrane. Together with CALCRL, form a receptor complex for adrenomedullin/ADM. Together with CALCR, act as a receptor complex for calcitonin/CT/CALC. Together with CALCR, also act as a receptor complex for amylin/IAPP. The chain is Receptor activity-modifying protein 2 from Homo sapiens (Human).